The sequence spans 267 residues: Distal basal body ring component protein (267 aa).

The N-terminal stretch at 1 to 29 (MKAFLFAAAATLVITALSAPAFAGTPVTL) is a signal peptide.

In terms of assembly, flaD is a subunit of the flagellar transenvelope basal body.

The protein localises to the periplasm. The protein resides in the bacterial flagellum basal body. In terms of biological role, flaD might be the structural protein of the distal basal body ring P, or it is necessary for the assembly of the P ring. This is Distal basal body ring component protein (flaD) from Caulobacter vibrioides (strain ATCC 19089 / CIP 103742 / CB 15) (Caulobacter crescentus).